Here is a 197-residue protein sequence, read N- to C-terminus: ATP-dependent Clp protease proteolytic subunit 2 (197 aa).

The active-site Nucleophile is Ser-101. His-126 is a catalytic residue.

Belongs to the peptidase S14 family. Fourteen ClpP subunits assemble into 2 heptameric rings which stack back to back to give a disk-like structure with a central cavity, resembling the structure of eukaryotic proteasomes.

The protein resides in the cytoplasm. The enzyme catalyses Hydrolysis of proteins to small peptides in the presence of ATP and magnesium. alpha-casein is the usual test substrate. In the absence of ATP, only oligopeptides shorter than five residues are hydrolyzed (such as succinyl-Leu-Tyr-|-NHMec, and Leu-Tyr-Leu-|-Tyr-Trp, in which cleavage of the -Tyr-|-Leu- and -Tyr-|-Trp bonds also occurs).. Its function is as follows. Cleaves peptides in various proteins in a process that requires ATP hydrolysis. Has a chymotrypsin-like activity. Plays a major role in the degradation of misfolded proteins. The chain is ATP-dependent Clp protease proteolytic subunit 2 from Trichormus variabilis (strain ATCC 29413 / PCC 7937) (Anabaena variabilis).